The sequence spans 466 residues: Argininosuccinate lyase 1 (466 aa).

The protein belongs to the lyase 1 family. Argininosuccinate lyase subfamily.

The protein localises to the cytoplasm. It carries out the reaction 2-(N(omega)-L-arginino)succinate = fumarate + L-arginine. It functions in the pathway amino-acid biosynthesis; L-arginine biosynthesis; L-arginine from L-ornithine and carbamoyl phosphate: step 3/3. The chain is Argininosuccinate lyase 1 from Mesorhizobium japonicum (strain LMG 29417 / CECT 9101 / MAFF 303099) (Mesorhizobium loti (strain MAFF 303099)).